The chain runs to 350 residues: Serpentine receptor class beta-12 (350 aa).

Over 1–21 (MSEANLTECELAYQLTYHPFY) the chain is Extracellular. Residue N5 is glycosylated (N-linked (GlcNAc...) asparagine). Residues 22 to 42 (MIAQFWSFFVSLLAMPSLIFF) traverse the membrane as a helical segment. Topologically, residues 43–57 (MVEKVFKLPFHGNLK) are cytoplasmic. Residues 58–78 (FLLVSYFIGTFLFASIICFTF) traverse the membrane as a helical segment. At 79–103 (GYHFFVPFFVTSNCDLIINATLFKY) the chain is on the extracellular side. The N-linked (GlcNAc...) asparagine glycan is linked to N97. The helical transmembrane segment at 104-124 (GHMIALIFMTIPMILPTAFTV) threads the bilayer. At 125 to 141 (ERFVALKMAHSYEHVRT) the chain is on the cytoplasmic side. A helical membrane pass occupies residues 142–162 (LLGPVLVLVVIAIDSMFLYDI). Topologically, residues 163-189 (YGQEKFDKPFINFILVPATSALQFNSF) are extracellular. A helical transmembrane segment spans residues 190–210 (LWYMLYLKITNFICNLILLFI). Residues 211 to 243 (HKILHQSSRYRRKNVSLSVKYEMQEISQSSRFT) lie on the Cytoplasmic side of the membrane. Residues 244–264 (LIVTFTHLLFFGWYVSTILLI) traverse the membrane as a helical segment. Topologically, residues 265–282 (RTVGPDFFRGFINYTVMR) are extracellular. An N-linked (GlcNAc...) asparagine glycan is attached at N277. The chain crosses the membrane as a helical span at residues 283–303 (GVYCATPTYNLVIVFIGFKAL). At 304–350 (NHLNFKRNNKVQSTIQIKSTGQEGAENYDNAISNYWDSVYTMNKSKL) the chain is on the cytoplasmic side.

This sequence belongs to the nematode receptor-like protein srb family. Expressed throughout the head.

Its subcellular location is the cell membrane. It is found in the perikaryon. The protein resides in the cell projection. The protein localises to the dendrite. Its function is as follows. G-protein coupled receptor. Plays a role in the navigational capacity of sperm and promotes the targeting of sperm derived from males to the fertilization site in the uterus of hermaphrodites. The protein is Serpentine receptor class beta-12 of Caenorhabditis elegans.